The following is a 235-amino-acid chain: Elongation factor Tu (235 aa).

One can recognise a tr-type G domain in the interval 1–125 (KNMITGAAQM…QVDEYIPAPE (125 aa)). 47–50 (NKQD) is a binding site for GTP.

It belongs to the TRAFAC class translation factor GTPase superfamily. Classic translation factor GTPase family. EF-Tu/EF-1A subfamily. As to quaternary structure, monomer.

The protein resides in the cytoplasm. The enzyme catalyses GTP + H2O = GDP + phosphate + H(+). In terms of biological role, GTP hydrolase that promotes the GTP-dependent binding of aminoacyl-tRNA to the A-site of ribosomes during protein biosynthesis. This Leptolyngbya ectocarpi (Phormidium ectocarpi) protein is Elongation factor Tu (tufA).